Consider the following 546-residue polypeptide: ATP synthase F(1) complex catalytic subunit beta, mitochondrial (546 aa).

The N-terminal 45 residues, 1 to 45, are a transit peptide targeting the mitochondrion; it reads MLGFVGRVAATSASGALRGLGPSPLPQVKVLLRASPAALQSARDY. Residues Lys-123, Lys-132, and Lys-160 each carry the N6-acetyllysine; alternate modification. Residues Lys-123, Lys-132, and Lys-160 each carry the N6-succinyllysine; alternate modification. Lys-197 carries the post-translational modification N6-acetyllysine. ADP contacts are provided by Gly-208, Val-209, Gly-210, Lys-211, Thr-212, and Val-213. An ATP-binding site is contributed by Gly-208. Phosphate contacts are provided by Gly-208, Val-209, Gly-210, Lys-211, and Thr-212. Residues Gly-210, Lys-211, Thr-212, and Val-213 each coordinate ATP. A Mg(2+)-binding site is contributed by Thr-212. Glu-237 provides a ligand contact to Mg(2+). Position 238 (Arg-238) interacts with ATP. An N6-acetyllysine; alternate mark is found at Lys-258 and Lys-263. Lys-258 and Lys-263 each carry N6-succinyllysine; alternate. Thr-311 carries the post-translational modification Phosphothreonine. N6-acetyllysine is present on Lys-425. Ser-432 carries the post-translational modification Phosphoserine. Lys-479 and Lys-484 each carry N6-acetyllysine. The residue at position 521 (Lys-521) is an N6-acetyllysine; alternate. The residue at position 521 (Lys-521) is an N6-succinyllysine; alternate. Residues 521 to 546 are disordered; it reads KLAEEHSATQTSPSPKGAAAXXXRVV.

The protein belongs to the ATPase alpha/beta chains family. As to quaternary structure, homotrimer. Component of the ATP synthase complex composed at least of ATP5F1A/subunit alpha, ATP5F1B/subunit beta, ATP5MC1/subunit c (homooctomer), MT-ATP6/subunit a, MT-ATP8/subunit 8, ATP5ME/subunit e, ATP5MF/subunit f, ATP5MG/subunit g, ATP5MK/subunit k, ATP5MJ/subunit j, ATP5F1C/subunit gamma, ATP5F1D/subunit delta, ATP5F1E/subunit epsilon, ATP5PF/subunit F6, ATP5PB/subunit b, ATP5PD/subunit d, ATP5PO/subunit OSCP. ATP synthase complex consists of a soluble F(1) head domain (subunits alpha(3) and beta(3)) - the catalytic core - and a membrane F(0) domain - the membrane proton channel (subunits c, a, 8, e, f, g, k and j). These two domains are linked by a central stalk (subunits gamma, delta, and epsilon) rotating inside the F1 region and a stationary peripheral stalk (subunits F6, b, d, and OSCP). Interacts with PPIF. Interacts with BCL2L1 isoform BCL-X(L); the interaction mediates the association of BCL2L1 isoform BCL-X(L) with the mitochondrial membrane F(1)F(0) ATP synthase and enhances neurons metabolic efficiency. Interacts with CLN5 and PPT1. Interacts with S100A1; this interaction increases F1-ATPase activity. Interacts with MTLN. Interacts with TTC5/STRAP; the interaction results in decreased mitochondrial ATP production.

The protein localises to the mitochondrion inner membrane. It carries out the reaction ATP + H2O + 4 H(+)(in) = ADP + phosphate + 5 H(+)(out). Its function is as follows. Catalytic subunit beta, of the mitochondrial membrane ATP synthase complex (F(1)F(0) ATP synthase or Complex V) that produces ATP from ADP in the presence of a proton gradient across the membrane which is generated by electron transport complexes of the respiratory chain. ATP synthase complex consist of a soluble F(1) head domain - the catalytic core - and a membrane F(1) domain - the membrane proton channel. These two domains are linked by a central stalk rotating inside the F(1) region and a stationary peripheral stalk. During catalysis, ATP synthesis in the catalytic domain of F(1) is coupled via a rotary mechanism of the central stalk subunits to proton translocation. In vivo, can only synthesize ATP although its ATP hydrolase activity can be activated artificially in vitro. With the subunit alpha (ATP5F1A), forms the catalytic core in the F(1) domain. The sequence is that of ATP synthase F(1) complex catalytic subunit beta, mitochondrial from Canis lupus familiaris (Dog).